We begin with the raw amino-acid sequence, 355 residues long: Protein RecA (355 aa).

Residue glycine 67 to threonine 74 participates in ATP binding.

Belongs to the RecA family.

It is found in the cytoplasm. Functionally, can catalyze the hydrolysis of ATP in the presence of single-stranded DNA, the ATP-dependent uptake of single-stranded DNA by duplex DNA, and the ATP-dependent hybridization of homologous single-stranded DNAs. It interacts with LexA causing its activation and leading to its autocatalytic cleavage. The sequence is that of Protein RecA from Shewanella halifaxensis (strain HAW-EB4).